We begin with the raw amino-acid sequence, 411 residues long: Peptide chain release factor subunit 1 (411 aa).

It belongs to the eukaryotic release factor 1 family. In terms of assembly, heterodimer of two subunits, one of which binds GTP.

It localises to the cytoplasm. Functionally, directs the termination of nascent peptide synthesis (translation) in response to the termination codons UAA, UAG and UGA. The polypeptide is Peptide chain release factor subunit 1 (Methanosphaera stadtmanae (strain ATCC 43021 / DSM 3091 / JCM 11832 / MCB-3)).